Consider the following 351-residue polypeptide: MSWYSKIYVAVREYRAKHKITGWILTRCLNVLLFIQLILLWWSLYMYVTVTIGYYVQSTIQATIYLIVGSFLFVMSMWSLAKTLFTRVGRVPERYRPSKELEDRLKAVTPMEKNRYVVEKSTPEQLAQQNTILEEMCTYCKVVVAECDQVGRLKYCYECGHIKPDRARHCSSCGKCCIKYDHHCPWINMCVTHVNYKYFLLYIIYTSFLVYWYLLTSLEGAVRYFINQQWTDELGKFLFYLFSFIVGGVFGYYPLGELIIFHYQLISLNETTVEQTKPALLRFDNAADYNMGKYNNFQSVFGWGLWLCPIDSSTQDGLHFDIRYVNTQQRNRFVRIEEEPSSTQSSQSSIQ.

Helical transmembrane passes span Thr-21–Ser-43, Ile-60–Leu-80, Tyr-198–Leu-218, and Leu-241–Phe-261. The DHHC domain maps to Lys-154 to Ile-204.

It belongs to the DHHC palmitoyltransferase family. In terms of tissue distribution, expressed during spermatogenesis in budding and budded spermatids.

It is found in the membrane. It carries out the reaction L-cysteinyl-[protein] + hexadecanoyl-CoA = S-hexadecanoyl-L-cysteinyl-[protein] + CoA. Involved in spermatogenesis, specifically in the morphogenesis of fibrous body-membranous organelles (FB-MO), which are Golgi-derived organelles used for transporting sperm-specific components, in spermatocytes and in their localization into budding spermatids. Required for the proper formation of spermatids and spermatozoa. In Caenorhabditis elegans, this protein is Palmitoyltransferase spe-10.